Consider the following 314-residue polypeptide: Vacuolar membrane protein FOSTERSO_4058 (314 aa).

The disordered stretch occupies residues 32-59 (KPTSSVVSETSSKSLPSLTSSAFSTSSG). Residues 93 to 113 (VYIAVGAVIGAIFISILIWWL) form a helical membrane-spanning segment. Serine 148, serine 254, and serine 274 each carry phosphoserine. Residues 240–309 (EERKLNLNRP…PSMFLDDVLN (70 aa)) form a disordered region. Residues 254–269 (SPERKEKKINSMEGYH) show a composition bias toward basic and acidic residues.

This sequence belongs to the PRM5 family.

Its subcellular location is the vacuole membrane. This is Vacuolar membrane protein FOSTERSO_4058 from Saccharomyces cerevisiae (strain FostersO) (Baker's yeast).